A 309-amino-acid chain; its full sequence is Calcium homeostasis modulator protein 5 (309 aa).

Over methionine 1–lysine 15 the chain is Cytoplasmic. Residues threonine 16 to valine 37 traverse the membrane as a helical segment. 2 residues coordinate a 1,2-diacyl-sn-glycero-3-phosphate: arginine 32 and valine 37. The Extracellular segment spans residues alanine 38–valine 45. Disulfide bonds link cysteine 41–cysteine 127, cysteine 43–cysteine 158, and cysteine 142–cysteine 149. Residues glutamate 46–asparagine 70 traverse the membrane as a helical segment. Residues asparagine 71–valine 99 are Cytoplasmic-facing. The chain crosses the membrane as a helical span at residues leucine 100–methionine 129. An a 1,2-diacyl-sn-glycero-3-phosphate-binding site is contributed by asparagine 121. Over serine 130–serine 174 the chain is Extracellular. The helical transmembrane segment at leucine 175–tyrosine 200 threads the bilayer. At alanine 201–leucine 309 the chain is on the cytoplasmic side. Arginine 202 provides a ligand contact to a 1,2-diacyl-sn-glycero-3-phosphate.

It belongs to the CALHM family. Oligomerizes to form undecameric cone-shaped channels.

Its subcellular location is the membrane. In terms of biological role, may assemble to form large pore channels with gating and ion conductance likely regulated by membrane lipids. This is Calcium homeostasis modulator protein 5 from Mus musculus (Mouse).